The primary structure comprises 56 residues: Prokaryotic ubiquitin-like protein UBact (56 aa).

Residues 1-56 (MPERIVKPMPQDPVTKPGDEGPRTPNVPKPDTERLLERMRRVDPRQAQRYRQRSGE) form a disordered region. Basic and acidic residues predominate over residues 30–46 (PDTERLLERMRRVDPRQ). An Isoglutamyl lysine isopeptide (Glu-Lys) (interchain with K-? in acceptor proteins) cross-link involves residue Glu56.

Belongs to the ubiquitin-like protein UBact family.

Its function is as follows. May function as a protein modifier covalently attached to lysine residues of substrate proteins. This may serve to target the modified proteins for degradation by proteasomes. The chain is Prokaryotic ubiquitin-like protein UBact from Acetithermum autotrophicum.